The chain runs to 341 residues: Phosphatidylserine decarboxylase proenzyme (341 aa).

Active-site charge relay system; for autoendoproteolytic cleavage activity residues include D90, H147, and S254. The active-site Schiff-base intermediate with substrate; via pyruvic acid; for decarboxylase activity is the S254. S254 carries the post-translational modification Pyruvic acid (Ser); by autocatalysis. The interval 287–341 is disordered; that stretch reads RQDEQTPVVFPEGTELEENDAAQPPVAATSEPVQADGQNPAAEVSGQTGHKPDAP.

This sequence belongs to the phosphatidylserine decarboxylase family. PSD-B subfamily. Prokaryotic type I sub-subfamily. In terms of assembly, heterodimer of a large membrane-associated beta subunit and a small pyruvoyl-containing alpha subunit. The cofactor is pyruvate. Is synthesized initially as an inactive proenzyme. Formation of the active enzyme involves a self-maturation process in which the active site pyruvoyl group is generated from an internal serine residue via an autocatalytic post-translational modification. Two non-identical subunits are generated from the proenzyme in this reaction, and the pyruvate is formed at the N-terminus of the alpha chain, which is derived from the carboxyl end of the proenzyme. The autoendoproteolytic cleavage occurs by a canonical serine protease mechanism, in which the side chain hydroxyl group of the serine supplies its oxygen atom to form the C-terminus of the beta chain, while the remainder of the serine residue undergoes an oxidative deamination to produce ammonia and the pyruvoyl prosthetic group on the alpha chain. During this reaction, the Ser that is part of the protease active site of the proenzyme becomes the pyruvoyl prosthetic group, which constitutes an essential element of the active site of the mature decarboxylase.

It localises to the cell membrane. It carries out the reaction a 1,2-diacyl-sn-glycero-3-phospho-L-serine + H(+) = a 1,2-diacyl-sn-glycero-3-phosphoethanolamine + CO2. It participates in phospholipid metabolism; phosphatidylethanolamine biosynthesis; phosphatidylethanolamine from CDP-diacylglycerol: step 2/2. Its function is as follows. Catalyzes the formation of phosphatidylethanolamine (PtdEtn) from phosphatidylserine (PtdSer). The polypeptide is Phosphatidylserine decarboxylase proenzyme (Pectobacterium atrosepticum (strain SCRI 1043 / ATCC BAA-672) (Erwinia carotovora subsp. atroseptica)).